Here is a 1715-residue protein sequence, read N- to C-terminus: Neurexin-2 (1715 aa).

A signal peptide spans 1 to 29 (MALGSRWRPPPQLPPLLLLLALVAGVRGL). Residues 30-206 (EFGGGPGQWA…LRGAAADPLC (177 aa)) enclose the Laminin G-like 1 domain. The Extracellular portion of the chain corresponds to 30–1639 (EFGGGPGQWA…EVIRESSSTT (1610 aa)). Asn-60 carries N-linked (GlcNAc...) asparagine glycosylation. The region spanning 202–242 (ADPLCAPARNPCANGGLCTVLAPGEVGCDCSHTGFGGKFCS) is the EGF-like 1 domain. 3 disulfide bridges follow: Cys-206/Cys-219, Cys-213/Cys-229, and Cys-231/Cys-241. Laminin G-like domains are found at residues 289–486 (VATF…SFRC) and 493–686 (DPVT…APFC). Residue Asp-335 coordinates Ca(2+). Asn-338 carries N-linked (GlcNAc...) asparagine glycosylation. Ca(2+) contacts are provided by Leu-352 and Met-420. Cystine bridges form between Cys-450-Cys-486, Cys-657-Cys-686, Cys-694-Cys-705, Cys-699-Cys-714, and Cys-716-Cys-726. Residues 690-727 (TLKQCASAPCRNGGICREGWNRFVCDCIGTGFLGRVCE) form the EGF-like 2 domain. Laminin G-like domains are found at residues 732 to 907 (VLSY…ITYC) and 921 to 1096 (DPVT…ERGC). 2 residues coordinate Ca(2+): Asp-779 and Leu-796. N-linked (GlcNAc...) asparagine glycosylation occurs at Asn-844. Position 857 (Arg-857) interacts with Ca(2+). 4 disulfide bridges follow: Cys-1068-Cys-1096, Cys-1103-Cys-1114, Cys-1108-Cys-1123, and Cys-1125-Cys-1135. The EGF-like 3 domain maps to 1099-1136 (PSTTCTEESCANQGVCLQQWDGFTCDCTMTSYGGPVCN). The 209-residue stretch at 1140–1348 (TTYIFGKGGA…HLRLVGEGPS (209 aa)) folds into the Laminin G-like 6 domain. Residues Asp-1192 and Val-1209 each contribute to the Ca(2+) site. The N-linked (GlcNAc...) asparagine glycan is linked to Asn-1239. Ile-1291 and Asn-1293 together coordinate Ca(2+). Ser-1403 carries an O-linked (Xyl...) (heparan sulfate) serine glycan. Disordered regions lie at residues 1461 to 1511 (ATQD…LPPT), 1529 to 1549 (LLSPRKPAPRPNLRTDGATGA), and 1583 to 1626 (LGPG…RGPP). The chain crosses the membrane as a helical span at residues 1640-1660 (GMVVGIVAAAALCILILLYAM). Residues 1661-1715 (YKYRNRDEGSYQVDQSRNYISNSAQSNGAVVKEKAPAAPKTPSKAKKNKDKEYYV) lie on the Cytoplasmic side of the membrane. The tract at residues 1682–1715 (NSAQSNGAVVKEKAPAAPKTPSKAKKNKDKEYYV) is disordered.

It belongs to the neurexin family. As to quaternary structure, the laminin G-like domain 1 binds to NXPH1. Interacts with PATJ. Interacts with CBLN1, CBLN2 and, less avidly, with CBLN4. Specific isoforms bind neuroligins NLGN1, NLGN2 and NLGN3. Isoform 5c/alpha-2C binds to alpha-dystroglycan. Interacts (via Laminin G-like 1 domain) with IGSF21 (Ig-like 1 domain) in a trans-interaction manner. Interacts with CLSTN3. O-glycosylated; contains heparan sulfate. Heparan sulfate attachment is required for synapse development by mediating interactions with neuroligins. As to expression, brain (neuronal synapse).

Its subcellular location is the presynaptic cell membrane. Functionally, neuronal cell surface protein that may be involved in cell recognition and cell adhesion. May mediate intracellular signaling. In Rattus norvegicus (Rat), this protein is Neurexin-2 (Nrxn2).